Here is a 201-residue protein sequence, read N- to C-terminus: MPIGVPKVPFRIPGEEDAVWVDVYRLHRERLLFLGQGVDSEISNQLIGLMVYLSLEDETRDLFLFINSPGGWVVPGVAIYDTMQFVPPDVHTICMGLAASMGSFLLVGGEITKRIAFPHARVMIHQPASSFYEAQTGEFVLEAEELLKLRETLTRVYVQRTGNPLWVVSEDMERDVFMSATEAQAHGIVDFVAVENTGDFA.

Ser-100 acts as the Nucleophile in catalysis. Residue His-125 is part of the active site.

This sequence belongs to the peptidase S14 family. In terms of assembly, component of the chloroplastic Clp protease core complex.

The protein localises to the plastid. It is found in the chloroplast stroma. The enzyme catalyses Hydrolysis of proteins to small peptides in the presence of ATP and magnesium. alpha-casein is the usual test substrate. In the absence of ATP, only oligopeptides shorter than five residues are hydrolyzed (such as succinyl-Leu-Tyr-|-NHMec, and Leu-Tyr-Leu-|-Tyr-Trp, in which cleavage of the -Tyr-|-Leu- and -Tyr-|-Trp bonds also occurs).. In terms of biological role, cleaves peptides in various proteins in a process that requires ATP hydrolysis. Has a chymotrypsin-like activity. Plays a major role in the degradation of misfolded proteins. The polypeptide is ATP-dependent Clp protease proteolytic subunit (Ranunculus macranthus (Large buttercup)).